Here is a 270-residue protein sequence, read N- to C-terminus: Purine nucleoside phosphorylase BT_4389 (270 aa).

Zn(2+) contacts are provided by His79, Cys124, and His141.

Belongs to the purine nucleoside phosphorylase YfiH/LACC1 family. As to quaternary structure, homodimer. The cofactor is Cu(2+). Zn(2+) serves as cofactor.

It carries out the reaction adenosine + phosphate = alpha-D-ribose 1-phosphate + adenine. The enzyme catalyses S-methyl-5'-thioadenosine + phosphate = 5-(methylsulfanyl)-alpha-D-ribose 1-phosphate + adenine. It catalyses the reaction inosine + phosphate = alpha-D-ribose 1-phosphate + hypoxanthine. The catalysed reaction is adenosine + H2O + H(+) = inosine + NH4(+). Its function is as follows. Purine nucleoside enzyme that catalyzes the phosphorolysis of adenosine and inosine nucleosides, yielding D-ribose 1-phosphate and the respective free bases, adenine and hypoxanthine. Also catalyzes the phosphorolysis of S-methyl-5'-thioadenosine into adenine and S-methyl-5-thio-alpha-D-ribose 1-phosphate. Also has adenosine deaminase activity. The protein is Purine nucleoside phosphorylase BT_4389 of Bacteroides thetaiotaomicron (strain ATCC 29148 / DSM 2079 / JCM 5827 / CCUG 10774 / NCTC 10582 / VPI-5482 / E50).